Reading from the N-terminus, the 426-residue chain is Potassium channel subfamily K member 2 (426 aa).

Topologically, residues 1–61 (MLASASRERP…SAINVMKWKT (61 aa)) are cytoplasmic. 2 important for GNG4 binding and L-glutamate release in astrocytes regions span residues 17-38 (AAPDLLDPKSAAQNSKPRLSFS) and 51-61 (DSAINVMKWKT). A helical membrane pass occupies residues 62-82 (VSTIFLVVVLYLIIGATVFKA). N-linked (GlcNAc...) asparagine glycans are attached at residues asparagine 110 and asparagine 134. The segment at residues 144–170 (LGSSFFFAGTVITTIGFGNISPRTEGG) is an intramembrane region (pore-forming). The K(+) site is built by threonine 157, isoleucine 158, glycine 159, and phenylalanine 160. The tract at residues 157–162 (TIGFGN) is selectivity filter 1. A helical transmembrane segment spans residues 172-192 (IFCIIYALLGIPLFGFLLAGV). The Cytoplasmic portion of the chain corresponds to 193–222 (GDQLGTIFGKGIAKVEDTFIKWNVSQTKIR). A helical membrane pass occupies residues 223 to 243 (IISTIIFILFGCVLFVALPAV). An intramembrane region (pore-forming) is located at residues 253-283 (ALDAIYFVVITLTTIGFGDYVAGGSDIEYLD). The K(+) site is built by threonine 266, isoleucine 267, glycine 268, and phenylalanine 269. The interval 266-271 (TIGFGD) is selectivity filter 2. Residues 288 to 308 (VVWFWILVGLAYFAAVLSMIG) form a helical membrane-spanning segment. The Cytoplasmic segment spans residues 309 to 426 (DWLRVISKKT…EDIAVIENMK (118 aa)). The interaction with AKAP5 stretch occupies residues 313 to 326 (VISKKTKEEVGEFR). An essential for chloroform and halothane sensitivity region spans residues 337–385 (TAEFKETRRRLSVEIYDKFQRATSVKRKLSAELAGNHNQELTPCRRTLS). Serine 348 carries the phosphoserine; by PKA modification.

This sequence belongs to the two pore domain potassium channel (TC 1.A.1.8) family. Homodimer; disulfide-linked. Forms heterodimers with other 2-pore domain K(+) channel subunits, such as KCNK1, KCNK4, KCNK10 and KCNK18. Interacts with AKAP5; the channel is recruited to postsynaptic microdomains by AKAP5 where it can integrate neurotransmitter receptor signals. Part of a complex composed of AKAP5 and ADRB2. Upon AKAP5 binding, the channel is no longer sensitive to intracellular acidification, membrane stretch or arachidonic acid stimuli. Interacts with POPDC1; the interaction enhances KCNK2 surface expression and is inhibited by cAMP. Interacts (via N-terminus) with G-protein subunit GNG4 (via C-terminus); this interaction confers ion selectivity to L-glutamate and Cl(-) anions. Post-translationally, phosphorylation at Ser-348 controls the reversible conversion from a leak channel to a voltage-dependent channel. Expressed in cardiomyocytes (at protein level). Expressed in various brain regions including the lateral olfactory tract, piriform cortex of the forebrain, paraventricular and anteromedial thalamic nuclei, brainstem, caudate putamen, nucleus accumbens, neocortex and interpeduncular nucleus. Detected in astrocytes in hippocampus stratum radiatum. In terms of tissue distribution, expressed in brain and kidney.

It localises to the cell membrane. It is found in the endoplasmic reticulum membrane. The protein resides in the cell projection. Its subcellular location is the axon. The protein localises to the dendrite. It localises to the postsynaptic density membrane. It is found in the sarcolemma. The catalysed reaction is K(+)(in) = K(+)(out). The enzyme catalyses L-glutamate(out) = L-glutamate(in). It carries out the reaction chloride(in) = chloride(out). It catalyses the reaction Rb(+)(in) = Rb(+)(out). The catalysed reaction is Cs(+)(in) = Cs(+)(out). With respect to regulation, activated by various stimuli including intracellular acidic pH, mechanical stretch and polyunsaturated fatty acids such as arachidonic acid. Functionally, k(+) channel that conducts voltage-dependent outward rectifying currents upon membrane depolarization. Voltage sensing is coupled to K(+) electrochemical gradient in an 'ion flux gating' mode where outward but not inward ion flow opens the gate. Converts to voltage-independent 'leak' conductance mode upon stimulation by various stimuli including mechanical membrane stretch, acidic pH, heat and lipids. Reversibly converts between a voltage-insensitive K(+) 'leak' channel and a voltage-dependent outward rectifying K(+) channel in a phosphorylation-dependent manner. Homo- and heterodimerizes to form functional channels with distinct regulatory and gating properties. In trigeminal ganglia sensory neurons, the heterodimer of KCNK2/TREK-1 and KCNK18/TRESK inhibits neuronal firing and neurogenic inflammation by stabilizing the resting membrane potential at K(+) equilibrium potential as well as by regulating the threshold of action potentials and the spike frequency. At trigeminal A-beta afferent nerves, the heterodimer of KCNK2/TREK-1 and KCNK4/TRAAK is mostly coexpressed at nodes of Ranvier where it conducts voltage-independent mechanosensitive and thermosensitive currents, allowing rapid action potential repolarization, high speed and high frequence saltatory conduction on myelinated nerves to ensure prompt sensory responses. In hippocampal astrocytes, the heterodimer of KCNK2/TREK-1 and KCNK1/TWIK-1 allows passive K(+) conductance under basal conditions, but changes ion selectivity and becomes permeable to L-glutamate and Cl(-) ions upon binding to G-protein subunit GNG4 in stimulated astrocytes. Mediates rapid L-glutamate release in response to activation of G-protein-coupled receptors such as F2R and CNR1. In hippocampal pyramidal neurons, the homodimer of KCNK2/TREK-1 contributes to gamma-aminobutyric acid (GABA) B-induced slow inhibitory postsynaptic potential. Associates with AKAP5 and Gs-protein-coupled receptor B2AR at postsynaptic dense bodies and converts to a leak channel no longer sensitive to stimulation by arachidonic acid, acidic pH or mechanical stress, nor inhibited by Gq-coupled receptors but still under the negative control of Gs-coupled receptors. Permeable to other monovalent cations such as Rb(+) and Cs(+). In terms of biological role, does not display channel activity but reduces the channel activity of isoform 1, isoform 2 and isoform 4 and reduces cell surface expression of isoform 2. The sequence is that of Potassium channel subfamily K member 2 from Rattus norvegicus (Rat).